A 162-amino-acid chain; its full sequence is Large ribosomal subunit protein uL15 (162 aa).

Residues 1 to 44 (MKLNELRDNPGATKNRIRVGRGIGSGKGKTAGRGVKGQKSREGV) form a disordered region. Residues 21 to 35 (RGIGSGKGKTAGRGV) are compositionally biased toward gly residues.

It belongs to the universal ribosomal protein uL15 family. As to quaternary structure, part of the 50S ribosomal subunit.

In terms of biological role, binds to the 23S rRNA. The protein is Large ribosomal subunit protein uL15 of Rhodospirillum rubrum (strain ATCC 11170 / ATH 1.1.1 / DSM 467 / LMG 4362 / NCIMB 8255 / S1).